Consider the following 597-residue polypeptide: Sialic acid-binding Ig-like lectin 12 (597 aa).

Positions 1 to 20 (MLLLLLLLLLPPLLCGRVGA) are cleaved as a signal peptide. Ig-like V-type domains are found at residues 21–144 (KEQK…VNVT) and 145–271 (ASQD…VHVT). Topologically, residues 21-483 (KEQKDYLLTM…RPISGVTLGA (463 aa)) are extracellular. Cysteines 46 and 106 form a disulfide. Asn-142, Asn-181, Asn-232, and Asn-292 each carry an N-linked (GlcNAc...) asparagine glycan. 3 cysteine pairs are disulfide-bonded: Cys-168–Cys-301, Cys-173–Cys-233, and Cys-295–Cys-344. Residues 277–360 (PTFSIPGTLE…AGVTTTRAVR (84 aa)) form the Ig-like C2-type 1 domain. N-linked (GlcNAc...) asparagine glycans are attached at residues Asn-362, Asn-369, and Asn-387. In terms of domain architecture, Ig-like C2-type 2 spans 367-464 (PQNLTMTVFQ…GSQHISLSLS (98 aa)). Cys-403 and Cys-448 are oxidised to a cystine. Residues 484 to 504 (VGGAGATALVFLSFCIIFVVV) form a helical membrane-spanning segment. Residues 505–597 (RSCRKKSARP…YEYSEINILK (93 aa)) lie on the Cytoplasmic side of the membrane. The disordered stretch occupies residues 514 to 558 (PAVGVGDTGMEDTNAVRGSASQGPLIESPADDSPPHHAPPALATP). Positions 565-570 (IQYASL) match the ITIM motif motif. Phosphotyrosine is present on residues Tyr-567 and Tyr-590. The SLAM-like motif motif lies at 588–593 (YEYSEI).

It belongs to the immunoglobulin superfamily. SIGLEC (sialic acid binding Ig-like lectin) family.

It localises to the membrane. Functionally, putative adhesion molecule that mediates sialic-acid dependent binding to cells. The sialic acid recognition site may be masked by cis interactions with sialic acids on the same cell surface. This Pan troglodytes (Chimpanzee) protein is Sialic acid-binding Ig-like lectin 12 (SIGLEC12).